We begin with the raw amino-acid sequence, 181 residues long: ATP-dependent protease subunit HslV (181 aa).

The active site involves Thr9. Na(+)-binding residues include Ala166, Cys169, and Thr172.

This sequence belongs to the peptidase T1B family. HslV subfamily. As to quaternary structure, a double ring-shaped homohexamer of HslV is capped on each side by a ring-shaped HslU homohexamer. The assembly of the HslU/HslV complex is dependent on binding of ATP.

It localises to the cytoplasm. The catalysed reaction is ATP-dependent cleavage of peptide bonds with broad specificity.. Allosterically activated by HslU binding. Functionally, protease subunit of a proteasome-like degradation complex believed to be a general protein degrading machinery. This is ATP-dependent protease subunit HslV from Staphylococcus aureus (strain bovine RF122 / ET3-1).